The following is a 57-amino-acid chain: Preprotein translocase subunit SecG (57 aa).

At 1–31 (MAKKKGEGPGLMSSAGLMRYFESEETSIKLD) the chain is on the cytoplasmic side. Residues 32–53 (PKMVIGAGIASGVAIMALNITF) form a helical membrane-spanning segment. Topologically, residues 54 to 57 (GLWP) are extracellular.

Belongs to the SEC61-beta family. Component of the protein translocase complex. Heterotrimer consisting of alpha (SecY), beta (SecG) and gamma (SecE) subunits. Can form oligomers of the heterotrimer.

The protein resides in the cell membrane. Involved in protein export. The function of the beta subunit is unknown, but it may be involved in stabilization of the trimeric complex. This is Preprotein translocase subunit SecG from Methanothrix thermoacetophila (strain DSM 6194 / JCM 14653 / NBRC 101360 / PT) (Methanosaeta thermophila).